A 150-amino-acid polypeptide reads, in one-letter code: Large ribosomal subunit protein bL9 (150 aa).

The protein belongs to the bacterial ribosomal protein bL9 family.

Its function is as follows. Binds to the 23S rRNA. The sequence is that of Large ribosomal subunit protein bL9 from Corynebacterium glutamicum (strain ATCC 13032 / DSM 20300 / JCM 1318 / BCRC 11384 / CCUG 27702 / LMG 3730 / NBRC 12168 / NCIMB 10025 / NRRL B-2784 / 534).